Here is a 167-residue protein sequence, read N- to C-terminus: Protein-export protein SecB (167 aa).

The protein belongs to the SecB family. As to quaternary structure, homotetramer, a dimer of dimers. One homotetramer interacts with 1 SecA dimer.

The protein localises to the cytoplasm. In terms of biological role, one of the proteins required for the normal export of preproteins out of the cell cytoplasm. It is a molecular chaperone that binds to a subset of precursor proteins, maintaining them in a translocation-competent state. It also specifically binds to its receptor SecA. The chain is Protein-export protein SecB from Wolbachia sp. subsp. Brugia malayi (strain TRS).